The chain runs to 160 residues: Ribosomal RNA large subunit methyltransferase H (160 aa).

The S-adenosyl-L-methionine site is built by Leu-76 and Gly-108.

This sequence belongs to the RNA methyltransferase RlmH family. As to quaternary structure, homodimer.

It is found in the cytoplasm. The catalysed reaction is pseudouridine(1915) in 23S rRNA + S-adenosyl-L-methionine = N(3)-methylpseudouridine(1915) in 23S rRNA + S-adenosyl-L-homocysteine + H(+). Specifically methylates the pseudouridine at position 1915 (m3Psi1915) in 23S rRNA. This is Ribosomal RNA large subunit methyltransferase H from Nitrobacter winogradskyi (strain ATCC 25391 / DSM 10237 / CIP 104748 / NCIMB 11846 / Nb-255).